A 154-amino-acid polypeptide reads, in one-letter code: Ribosomal RNA large subunit methyltransferase H (154 aa).

Residues Leu70, Gly102, and 121-126 contribute to the S-adenosyl-L-methionine site; that span reads LSRLTF.

This sequence belongs to the RNA methyltransferase RlmH family. Homodimer.

It is found in the cytoplasm. It carries out the reaction pseudouridine(1915) in 23S rRNA + S-adenosyl-L-methionine = N(3)-methylpseudouridine(1915) in 23S rRNA + S-adenosyl-L-homocysteine + H(+). Functionally, specifically methylates the pseudouridine at position 1915 (m3Psi1915) in 23S rRNA. This chain is Ribosomal RNA large subunit methyltransferase H, found in Geobacter metallireducens (strain ATCC 53774 / DSM 7210 / GS-15).